Reading from the N-terminus, the 576-residue chain is MAIHTCFSLIPSSFSSPKLPYPKNTTFQSPIPKLSRPTFMFDRKGSFQNGTAAVPAVGEDFPIDYADWLPKRDPNDRRRAGILLHPTSFPGPYGIGDLGPQAFKFLDWLHLAGCSLWQVLPLVPPGKRGNEDGSPYSGQDANCGNTLLISLEELVDDGLLKMEELPEPLPTDRVNYSTISEIKDPLITKAAKRLLSSEGELKDQLENFRRDPNISSWLEDAAYFAAIDNSVNTISWYDWPEPLKNRHLAALEEVYQSEKDFIDIFIAQQFLFQRQWKKVRDYARSKGISIMGDMPIYVGYHSADVWANKKQFLLNRKGFPLIVSGVPPDAFSETGQLWGSPLYDWKAMEKDGFSWWVRRIQRATDLFDEFRIDHFRGFAGFWAVPSEEKIAILGRWKVGPGKPLFDAILQAVGKINIIAEDLGVITEDVVQLRKSIEAPGMAVLQFAFGSDAENPHLPHNHEQNQVVYTGTHDNDTIRGWWDTLPQEEKSNVLKYLSNIEEEEISRGLIEGAVSSVARIAIIPMQDVLGLGSDSRMNIPATQFGNWSWRIPSSTSFDNLDAEAKKLRDILATYGRL.

Residues 1-52 (MAIHTCFSLIPSSFSSPKLPYPKNTTFQSPIPKLSRPTFMFDRKGSFQNGTA) constitute a chloroplast transit peptide.

This sequence belongs to the disproportionating enzyme family. Present in leaves, stems, roots, and stolons but is most abundant in developing and mature tubers.

It is found in the plastid. It localises to the chloroplast. The protein resides in the amyloplast. It catalyses the reaction Transfers a segment of a (1-&gt;4)-alpha-D-glucan to a new position in an acceptor, which may be glucose or a (1-&gt;4)-alpha-D-glucan.. In terms of biological role, may act during starch breakdown to convert small oligosaccharides into larger molecules upon which starch phosphorylase can act, or may change the structure of starch molecules and grain architecture by modifying chain length, or may generate from starch and glucose oligosaccharides which can serve either as primers for new starch phosphoenzyme. This is 4-alpha-glucanotransferase, chloroplastic/amyloplastic (DPEP) from Solanum tuberosum (Potato).